The chain runs to 94 residues: Integration host factor subunit beta (94 aa).

It belongs to the bacterial histone-like protein family. In terms of assembly, heterodimer of an alpha and a beta chain.

Functionally, this protein is one of the two subunits of integration host factor, a specific DNA-binding protein that functions in genetic recombination as well as in transcriptional and translational control. The polypeptide is Integration host factor subunit beta (Pseudomonas paraeruginosa (strain DSM 24068 / PA7) (Pseudomonas aeruginosa (strain PA7))).